Reading from the N-terminus, the 108-residue chain is Thioredoxin (108 aa).

The region spanning 2–108 is the Thioredoxin domain; it reads SDAILYVSDD…QLTAFLDSQL (107 aa). A disulfide bridge links C33 with C36.

It belongs to the thioredoxin family.

Its function is as follows. Component of the thioredoxin-thioredoxin reductase system. Participates in various redox reactions through the reversible oxidation of its active center dithiol to a disulfide and catalyzes dithiol-disulfide exchange reactions. The sequence is that of Thioredoxin (trxA) from Acidithiobacillus ferridurans.